Reading from the N-terminus, the 772-residue chain is Semaphorin-3A (772 aa).

The N-terminal stretch at 1–22 is a signal peptide; that stretch reads MGWLRGIALLSLGVLLAGRVNC. Residues 31 to 514 form the Sema domain; the sequence is RLKLSYKEML…SATGVSQLPL (484 aa). Residue Asn-53 is glycosylated (N-linked (GlcNAc...) asparagine). The cysteines at positions 103 and 114 are disulfide-linked. N-linked (GlcNAc...) asparagine glycosylation is present at Asn-125. 4 disulfide bridges follow: Cys-132–Cys-141, Cys-269–Cys-381, Cys-293–Cys-341, and Cys-517–Cys-535. Residues 576 to 665 enclose the Ig-like C2-type domain; the sequence is PSGQTLEEKI…GFIQTLLKVT (90 aa). Asn-591 carries N-linked (GlcNAc...) asparagine glycosylation. Cys-650 and Cys-723 are oxidised to a cystine. The tract at residues 730 to 772 is disordered; it reads DRKQRRQRPANAQVNTNKWKHLQENKKGRNRRTHEFERAPRSV. The segment covering 750–772 has biased composition (basic and acidic residues); the sequence is HLQENKKGRNRRTHEFERAPRSV.

The protein belongs to the semaphorin family. In terms of tissue distribution, expressed at relatively high levels in brain and muscle, moderate levels in lung, bursa, and heart and virtually absent in liver. Collapsin-1, -2, -3, and -5 bind to overlapping but distinct axon tracts.

It is found in the secreted. Its function is as follows. Induces the collapse and paralysis of neuronal growth cones. Could serve as a ligand that guides specific growth cones by a motility-inhibiting mechanism. Binds to neuropilin. This chain is Semaphorin-3A (SEMA3A), found in Gallus gallus (Chicken).